The sequence spans 155 residues: MEKKRYRPNVAAIVLSSNYPKKVEFFIAARSDVPDSWQFPQGGIDKGESPKEALLRELKEEIGTDKIEIIAEFPEWVSYDFPKKIAKKMYPYDGQTQKYFLVKLKPEAKIDLDTKEPEFNDYKFVPYKDLFHYVTFFKRPVYKKVLEYFKKEGYF.

The region spanning 5 to 147 is the Nudix hydrolase domain; that stretch reads RYRPNVAAIV…KRPVYKKVLE (143 aa). Positions 42–63 match the Nudix box motif; it reads GGIDKGESPKEALLRELKEEIG.

It belongs to the Nudix hydrolase family. RppH subfamily. A divalent metal cation is required as a cofactor.

In terms of biological role, accelerates the degradation of transcripts by removing pyrophosphate from the 5'-end of triphosphorylated RNA, leading to a more labile monophosphorylated state that can stimulate subsequent ribonuclease cleavage. This is RNA pyrophosphohydrolase from Nitratiruptor sp. (strain SB155-2).